The primary structure comprises 536 residues: MLRVHRLYSTRGAAEVLHAAPKYALRCGLEIHTQLNTRNKLFSLSTNDPFQAAATPNYHTSFFDISLPGTQPRLNYEAVLYAIKLSLALDCRVNLKSQFDRKHYFYGDQPLGYQITQHYNPIAKDGKLCLYGAYDNIPEDEKTIGIIQLQLEQDTGRSLYKDTDGMTLIDLNRSNVPLVEMVTQPDFTDVKQVRAFVKKYQNLVRHLNISTGDLETGAMRVDVNMSVNGHARVELKNLPNTSSITNAIRYEYQRQVDIIRSGQADKMLKDVETRGWTGSATIKLRSKESTIDYRYMPDPEIPVLLLEPEVVHRVATALPELPDQTLRKLMAEPYNLSLKDAKILTTNSNSHGNFYTHHDLRNYFMKTFQLFTAKTGASNSKLPANWIIHELLGIINKLEIPLPKILQLLPASHFAEFLALIHDNELSKSSAKLLLFHIINDFKESHCSNLALPDFRLLIEQYNLNPLNEVEEHALTELCQYVLRELNDDALVADLVSGKKKNALKFLLGKGMRLSQGKVDPALLEGAFKSVLGIKW.

A mitochondrion-targeting transit peptide spans 1–8 (MLRVHRLY).

This sequence belongs to the GatB/GatE family. GatB subfamily. As to quaternary structure, subunit of the heterotrimeric GatFAB amidotransferase (AdT) complex, composed of A, B and F subunits.

It is found in the mitochondrion. The catalysed reaction is L-glutamyl-tRNA(Gln) + L-glutamine + ATP + H2O = L-glutaminyl-tRNA(Gln) + L-glutamate + ADP + phosphate + H(+). Its function is as follows. Allows the formation of correctly charged Gln-tRNA(Gln) through the transamidation of misacylated Glu-tRNA(Gln) in the mitochondria. The reaction takes place in the presence of glutamine and ATP through an activated gamma-phospho-Glu-tRNA(Gln). The chain is Glutamyl-tRNA(Gln) amidotransferase subunit B, mitochondrial from Eremothecium gossypii (strain ATCC 10895 / CBS 109.51 / FGSC 9923 / NRRL Y-1056) (Yeast).